The sequence spans 479 residues: Isoprimeverose transporter (479 aa).

A run of 11 helical transmembrane segments spans residues 54–74 (MFFYTDVFGISAAIVGTLFLV), 102–122 (PYWLWFAIPFAVFSVLCFTVP), 131–151 (VWAYVTYIGVDVLYSAVNIPI), 174–194 (FMGTLGATIISTIALPLVAYF), 205–225 (WFMVALIMAVIAMVIFFIVFA), 253–273 (WPWVIVIFINFIYWLGMQTRS), 289–309 (LASFILGLQLVALLAVVITPW), 321–341 (LMGMLLAIVGQLILWGGSKAL), 348–368 (VGTIVGYLGTGFVSGLIAVML), 397–417 (FGMGIGGAVTGLILSAGGYVA), and 431–451 (MNYVWVPIVGFGLSAIALLFY).

The protein belongs to the sodium:galactoside symporter (TC 2.A.2) family.

It localises to the cell membrane. Functionally, involved in the metabolism of isoprimeverose. Transports isoprimeverose into the cell. Transport is driven by the proton motive force generated by malolactic fermentation. Cannot transport D-xylose. The chain is Isoprimeverose transporter from Lactiplantibacillus pentosus (Lactobacillus pentosus).